The sequence spans 537 residues: CTP synthase (537 aa).

Residues 1-267 (MAKYIFVTGG…DEYVIKRLNL (267 aa)) form an amidoligase domain region. S13 provides a ligand contact to CTP. Residue S13 participates in UTP binding. 14-19 (SLGKGI) is a binding site for ATP. Y54 contributes to the L-glutamine binding site. Position 71 (D71) interacts with ATP. Positions 71 and 141 each coordinate Mg(2+). Residues 148–150 (DIE), 188–193 (KTKPTQ), and K224 each bind CTP. Residues 188–193 (KTKPTQ) and K224 each bind UTP. 240–242 (RDV) contributes to the ATP binding site. One can recognise a Glutamine amidotransferase type-1 domain in the interval 292-534 (EVALVGKYVD…VKAMLNLKIN (243 aa)). L-glutamine is bound at residue G354. The active-site Nucleophile; for glutamine hydrolysis is C381. Residues 382-385 (LGMQ), E405, and R462 contribute to the L-glutamine site. Residues H507 and E509 contribute to the active site.

It belongs to the CTP synthase family. Homotetramer.

The catalysed reaction is UTP + L-glutamine + ATP + H2O = CTP + L-glutamate + ADP + phosphate + 2 H(+). It carries out the reaction L-glutamine + H2O = L-glutamate + NH4(+). It catalyses the reaction UTP + NH4(+) + ATP = CTP + ADP + phosphate + 2 H(+). It functions in the pathway pyrimidine metabolism; CTP biosynthesis via de novo pathway; CTP from UDP: step 2/2. With respect to regulation, allosterically activated by GTP, when glutamine is the substrate; GTP has no effect on the reaction when ammonia is the substrate. The allosteric effector GTP functions by stabilizing the protein conformation that binds the tetrahedral intermediate(s) formed during glutamine hydrolysis. Inhibited by the product CTP, via allosteric rather than competitive inhibition. Its function is as follows. Catalyzes the ATP-dependent amination of UTP to CTP with either L-glutamine or ammonia as the source of nitrogen. Regulates intracellular CTP levels through interactions with the four ribonucleotide triphosphates. The protein is CTP synthase of Caldanaerobacter subterraneus subsp. tengcongensis (strain DSM 15242 / JCM 11007 / NBRC 100824 / MB4) (Thermoanaerobacter tengcongensis).